Consider the following 441-residue polypeptide: Ribosomal protein uS12 methylthiotransferase RimO (441 aa).

Positions 7–117 constitute an MTTase N-terminal domain; sequence PKISFVSLGC…VLEAVHRARP (111 aa). Residues Cys-16, Cys-52, Cys-81, Cys-148, Cys-152, and Cys-155 each coordinate [4Fe-4S] cluster. The region spanning 134-371 is the Radical SAM core domain; that stretch reads LTPRHYAYLK…MARQQAISAR (238 aa). The TRAM domain maps to 374-440; that stretch reads KRKVGTRQQV…AYDLHGTVAG (67 aa).

The protein belongs to the methylthiotransferase family. RimO subfamily. [4Fe-4S] cluster is required as a cofactor.

The protein localises to the cytoplasm. It catalyses the reaction L-aspartate(89)-[ribosomal protein uS12]-hydrogen + (sulfur carrier)-SH + AH2 + 2 S-adenosyl-L-methionine = 3-methylsulfanyl-L-aspartate(89)-[ribosomal protein uS12]-hydrogen + (sulfur carrier)-H + 5'-deoxyadenosine + L-methionine + A + S-adenosyl-L-homocysteine + 2 H(+). Catalyzes the methylthiolation of an aspartic acid residue of ribosomal protein uS12. This chain is Ribosomal protein uS12 methylthiotransferase RimO, found in Rhodopseudomonas palustris (strain ATCC BAA-98 / CGA009).